The chain runs to 461 residues: Bifunctional protein GlmU (461 aa).

Residues 1–232 are pyrophosphorylase; the sequence is MNLQIIILAA…SFEVQGINNR (232 aa). UDP-N-acetyl-alpha-D-glucosamine is bound by residues 8 to 11, Lys22, Gln73, and 78 to 79; these read LAAG and GT. A Mg(2+)-binding site is contributed by Asp102. UDP-N-acetyl-alpha-D-glucosamine contacts are provided by Gly142, Glu157, and Asn230. Asn230 lines the Mg(2+) pocket. The segment at 233 to 253 is linker; sequence QQLQQLERIWQQRAANQLMEK. The N-acetyltransferase stretch occupies residues 254 to 461; sequence GATLADANRF…WKRPVKRERD (208 aa). The UDP-N-acetyl-alpha-D-glucosamine site is built by Arg336 and Lys354. Residue His366 is the Proton acceptor of the active site. 2 residues coordinate UDP-N-acetyl-alpha-D-glucosamine: Tyr369 and Asn380. Acetyl-CoA is bound by residues Ala383, 389-390, Ser408, and Ala426; that span reads NY.

In the N-terminal section; belongs to the N-acetylglucosamine-1-phosphate uridyltransferase family. This sequence in the C-terminal section; belongs to the transferase hexapeptide repeat family. Homotrimer. Mg(2+) serves as cofactor.

The protein resides in the cytoplasm. The catalysed reaction is alpha-D-glucosamine 1-phosphate + acetyl-CoA = N-acetyl-alpha-D-glucosamine 1-phosphate + CoA + H(+). It catalyses the reaction N-acetyl-alpha-D-glucosamine 1-phosphate + UTP + H(+) = UDP-N-acetyl-alpha-D-glucosamine + diphosphate. The protein operates within nucleotide-sugar biosynthesis; UDP-N-acetyl-alpha-D-glucosamine biosynthesis; N-acetyl-alpha-D-glucosamine 1-phosphate from alpha-D-glucosamine 6-phosphate (route II): step 2/2. It functions in the pathway nucleotide-sugar biosynthesis; UDP-N-acetyl-alpha-D-glucosamine biosynthesis; UDP-N-acetyl-alpha-D-glucosamine from N-acetyl-alpha-D-glucosamine 1-phosphate: step 1/1. It participates in bacterial outer membrane biogenesis; LPS lipid A biosynthesis. Functionally, catalyzes the last two sequential reactions in the de novo biosynthetic pathway for UDP-N-acetylglucosamine (UDP-GlcNAc). The C-terminal domain catalyzes the transfer of acetyl group from acetyl coenzyme A to glucosamine-1-phosphate (GlcN-1-P) to produce N-acetylglucosamine-1-phosphate (GlcNAc-1-P), which is converted into UDP-GlcNAc by the transfer of uridine 5-monophosphate (from uridine 5-triphosphate), a reaction catalyzed by the N-terminal domain. This Legionella pneumophila subsp. pneumophila (strain Philadelphia 1 / ATCC 33152 / DSM 7513) protein is Bifunctional protein GlmU.